We begin with the raw amino-acid sequence, 525 residues long: Probable protein kinase UbiB (525 aa).

The region spanning 119–501 (RFDHHPVASA…QRRTNRLLSA (383 aa)) is the Protein kinase domain. ATP is bound by residues 125-133 (VASASIAQV) and Lys-151. Residue Asp-286 is the Proton acceptor of the active site. A helical membrane pass occupies residues 502–522 (ALLFIGGFAVGIIATHVLAWL).

It belongs to the ABC1 family. UbiB subfamily.

The protein localises to the cell inner membrane. It functions in the pathway cofactor biosynthesis; ubiquinone biosynthesis [regulation]. Its function is as follows. Is probably a protein kinase regulator of UbiI activity which is involved in aerobic coenzyme Q (ubiquinone) biosynthesis. The polypeptide is Probable protein kinase UbiB (Ralstonia nicotianae (strain ATCC BAA-1114 / GMI1000) (Ralstonia solanacearum)).